The sequence spans 466 residues: Adenosylhomocysteinase (466 aa).

Residues T57, D132, and E192 each coordinate substrate. 193–195 serves as a coordination point for NAD(+); that stretch reads TTT. Residues K222 and D226 each contribute to the substrate site. NAD(+) is bound by residues N227, 256–261, E279, N314, 335–337, and N380; these read GYGDVG and IGH.

Belongs to the adenosylhomocysteinase family. Requires NAD(+) as cofactor.

Its subcellular location is the cytoplasm. The catalysed reaction is S-adenosyl-L-homocysteine + H2O = L-homocysteine + adenosine. Its pathway is amino-acid biosynthesis; L-homocysteine biosynthesis; L-homocysteine from S-adenosyl-L-homocysteine: step 1/1. Functionally, may play a key role in the regulation of the intracellular concentration of adenosylhomocysteine. The polypeptide is Adenosylhomocysteinase (Rhizobium leguminosarum bv. trifolii (strain WSM2304)).